The chain runs to 289 residues: MNVGNISTAMITPFDSKGNVDFQKLSTLIDYLLKNGTDSLVVAGTTGESPTLSTEEKIALFEFTVKEVNGRVPVIAGTGSNNTKDSIKLTKKAEEAGVDCVMLVTPYYNKPSQEGMYRHFKAIAEETSLPVMLYNVPGRTVASLAPETAIRLAEIPNISAIKEASGDLDAITKIIAETPEDFYVYSGDDGLTLPILAVGGRGVVSVASHIVGSDMQQMIKNYTNGQTATAALIHQKLLPIMKELFKAPNPAPVKTALQLKGLDVGSVRLPLIPLNEDERLSLSSVISEL.

Thr-46 provides a ligand contact to pyruvate. The active-site Proton donor/acceptor is Tyr-134. The Schiff-base intermediate with substrate role is filled by Lys-162. Residue Val-204 participates in pyruvate binding.

This sequence belongs to the DapA family. In terms of assembly, homotetramer; dimer of dimers.

It localises to the cytoplasm. The catalysed reaction is L-aspartate 4-semialdehyde + pyruvate = (2S,4S)-4-hydroxy-2,3,4,5-tetrahydrodipicolinate + H2O + H(+). The protein operates within amino-acid biosynthesis; L-lysine biosynthesis via DAP pathway; (S)-tetrahydrodipicolinate from L-aspartate: step 3/4. Functionally, catalyzes the condensation of (S)-aspartate-beta-semialdehyde [(S)-ASA] and pyruvate to 4-hydroxy-tetrahydrodipicolinate (HTPA). The polypeptide is 4-hydroxy-tetrahydrodipicolinate synthase (Bacillus velezensis (strain DSM 23117 / BGSC 10A6 / LMG 26770 / FZB42) (Bacillus amyloliquefaciens subsp. plantarum)).